We begin with the raw amino-acid sequence, 613 residues long: Protein translocase subunit SecD (613 aa).

A run of 6 helical transmembrane segments spans residues Ala10 to Phe30, Lys452 to Tyr472, Leu477 to Ile497, Leu503 to Ile523, Val548 to Gln568, and Gly576 to Thr596.

Belongs to the SecD/SecF family. SecD subfamily. In terms of assembly, forms a complex with SecF. Part of the essential Sec protein translocation apparatus which comprises SecA, SecYEG and auxiliary proteins SecDF-YajC and YidC.

The protein resides in the cell inner membrane. Its function is as follows. Part of the Sec protein translocase complex. Interacts with the SecYEG preprotein conducting channel. SecDF uses the proton motive force (PMF) to complete protein translocation after the ATP-dependent function of SecA. The protein is Protein translocase subunit SecD of Anaeromyxobacter dehalogenans (strain 2CP-C).